The primary structure comprises 301 residues: Phosphoribosylaminoimidazole-succinocarboxamide synthase (301 aa).

It belongs to the SAICAR synthetase family.

The enzyme catalyses 5-amino-1-(5-phospho-D-ribosyl)imidazole-4-carboxylate + L-aspartate + ATP = (2S)-2-[5-amino-1-(5-phospho-beta-D-ribosyl)imidazole-4-carboxamido]succinate + ADP + phosphate + 2 H(+). It functions in the pathway purine metabolism; IMP biosynthesis via de novo pathway; 5-amino-1-(5-phospho-D-ribosyl)imidazole-4-carboxamide from 5-amino-1-(5-phospho-D-ribosyl)imidazole-4-carboxylate: step 1/2. The protein is Phosphoribosylaminoimidazole-succinocarboxamide synthase of Syntrophobacter fumaroxidans (strain DSM 10017 / MPOB).